The sequence spans 430 residues: tRNA(Ile)-lysidine synthase (430 aa).

ATP is bound at residue Ser-27–Ser-32.

It belongs to the tRNA(Ile)-lysidine synthase family.

It localises to the cytoplasm. It carries out the reaction cytidine(34) in tRNA(Ile2) + L-lysine + ATP = lysidine(34) in tRNA(Ile2) + AMP + diphosphate + H(+). Ligates lysine onto the cytidine present at position 34 of the AUA codon-specific tRNA(Ile) that contains the anticodon CAU, in an ATP-dependent manner. Cytidine is converted to lysidine, thus changing the amino acid specificity of the tRNA from methionine to isoleucine. In Rickettsia akari (strain Hartford), this protein is tRNA(Ile)-lysidine synthase.